We begin with the raw amino-acid sequence, 131 residues long: Ribosome-binding factor A (131 aa).

It belongs to the RbfA family. As to quaternary structure, monomer. Binds 30S ribosomal subunits, but not 50S ribosomal subunits or 70S ribosomes.

The protein resides in the cytoplasm. Functionally, one of several proteins that assist in the late maturation steps of the functional core of the 30S ribosomal subunit. Associates with free 30S ribosomal subunits (but not with 30S subunits that are part of 70S ribosomes or polysomes). Required for efficient processing of 16S rRNA. May interact with the 5'-terminal helix region of 16S rRNA. This Thermotoga petrophila (strain ATCC BAA-488 / DSM 13995 / JCM 10881 / RKU-1) protein is Ribosome-binding factor A.